The primary structure comprises 354 residues: 3-dehydroquinate synthase (354 aa).

NAD(+)-binding positions include 100-104 (GATGD), 124-125 (TT), lysine 136, lysine 145, and 163-166 (FLAT). The Zn(2+) site is built by glutamate 178, histidine 242, and histidine 256.

The protein belongs to the sugar phosphate cyclases superfamily. Dehydroquinate synthase family. The cofactor is Co(2+). Requires Zn(2+) as cofactor. It depends on NAD(+) as a cofactor.

It is found in the cytoplasm. It carries out the reaction 7-phospho-2-dehydro-3-deoxy-D-arabino-heptonate = 3-dehydroquinate + phosphate. Its pathway is metabolic intermediate biosynthesis; chorismate biosynthesis; chorismate from D-erythrose 4-phosphate and phosphoenolpyruvate: step 2/7. In terms of biological role, catalyzes the conversion of 3-deoxy-D-arabino-heptulosonate 7-phosphate (DAHP) to dehydroquinate (DHQ). The polypeptide is 3-dehydroquinate synthase (Staphylococcus haemolyticus (strain JCSC1435)).